The chain runs to 153 residues: Aspartate carbamoyltransferase regulatory chain (153 aa).

Zn(2+) contacts are provided by cysteine 110, cysteine 115, cysteine 138, and cysteine 141.

It belongs to the PyrI family. Contains catalytic and regulatory chains. It depends on Zn(2+) as a cofactor.

Functionally, involved in allosteric regulation of aspartate carbamoyltransferase. In Bacteroides thetaiotaomicron (strain ATCC 29148 / DSM 2079 / JCM 5827 / CCUG 10774 / NCTC 10582 / VPI-5482 / E50), this protein is Aspartate carbamoyltransferase regulatory chain.